The following is a 779-amino-acid chain: Endoribonuclease YSH1 (779 aa).

Positions 68, 70, 72, 73, 163, and 184 each coordinate Zn(2+). His-408 serves as the catalytic Proton donor. Residue His-430 coordinates Zn(2+). Ser-517 is subject to Phosphoserine; by ATM or ATR.

The protein belongs to the metallo-beta-lactamase superfamily. RNA-metabolizing metallo-beta-lactamase-like family. CPSF2/YSH1 subfamily. As to quaternary structure, component of the cleavage and polyadenylation factor (CPF) complex, which is composed of at least PTI1, SYC1, SSU72, GLC7, MPE1, REF2, PFS2, PTA1, YSH1/BRR5, SWD2, CFT2/YDH1, YTH1, CFT1/YHH1, FIP1 and PAP1. Interacts with FIP1, PFS2, RNA14 and YTH1. Requires Zn(2+) as cofactor.

It is found in the nucleus. Its function is as follows. Component of the cleavage and polyadenylation factor (CPF) complex, which plays a key role in polyadenylation-dependent pre-mRNA 3'-end formation and cooperates with cleavage factors including the CFIA complex and NAB4/CFIB. Has endonuclease activity. The protein is Endoribonuclease YSH1 (YSH1) of Saccharomyces cerevisiae (strain ATCC 204508 / S288c) (Baker's yeast).